A 92-amino-acid polypeptide reads, in one-letter code: Small ribosomal subunit protein uS19 (92 aa).

Belongs to the universal ribosomal protein uS19 family.

In terms of biological role, protein S19 forms a complex with S13 that binds strongly to the 16S ribosomal RNA. This chain is Small ribosomal subunit protein uS19, found in Trichlorobacter lovleyi (strain ATCC BAA-1151 / DSM 17278 / SZ) (Geobacter lovleyi).